A 252-amino-acid polypeptide reads, in one-letter code: Cytochrome b6-f complex iron-sulfur subunit, chloroplastic (252 aa).

A helical transmembrane segment spans residues 94-114 (LVLAAVAPVVASAGGCYLYYF). One can recognise a Rieske domain in the interval 141-235 (WFKSHKKNAR…VEDDNGKILL (95 aa)). The [2Fe-2S] cluster site is built by cysteine 181, histidine 183, cysteine 199, and histidine 202. A disulfide bridge connects residues cysteine 186 and cysteine 201.

Belongs to the Rieske iron-sulfur protein family. The 4 large subunits of the cytochrome b6-f complex are cytochrome b6, subunit IV (17 kDa polypeptide, petD), cytochrome f and the Rieske protein, while the 4 small subunits are petG, petL, petM and petN. The complex functions as a dimer. The cofactor is [2Fe-2S] cluster.

Its subcellular location is the plastid. The protein localises to the chloroplast thylakoid membrane. It carries out the reaction 2 oxidized [plastocyanin] + a plastoquinol + 2 H(+)(in) = 2 reduced [plastocyanin] + a plastoquinone + 4 H(+)(out). Component of the cytochrome b6-f complex, which mediates electron transfer between photosystem II (PSII) and photosystem I (PSI), cyclic electron flow around PSI, and state transitions. This is Cytochrome b6-f complex iron-sulfur subunit, chloroplastic (petC) from Bigelowiella natans (Pedinomonas minutissima).